The chain runs to 235 residues: Urease accessory protein UreF (235 aa).

This sequence belongs to the UreF family. As to quaternary structure, ureD, UreF and UreG form a complex that acts as a GTP-hydrolysis-dependent molecular chaperone, activating the urease apoprotein by helping to assemble the nickel containing metallocenter of UreC. The UreE protein probably delivers the nickel.

Its subcellular location is the cytoplasm. Functionally, required for maturation of urease via the functional incorporation of the urease nickel metallocenter. This chain is Urease accessory protein UreF, found in Pseudoalteromonas translucida (strain TAC 125).